The sequence spans 255 residues: Ly6/PLAUR domain-containing protein 8 (255 aa).

The signal sequence occupies residues 1 to 20 (MRGVFIAGVIAAFAITVVDS). N-linked (GlcNAc...) asparagine glycans are attached at residues Asn22, Asn30, Asn53, Asn72, Asn76, Asn105, Asn115, Asn128, Asn154, Asn169, Asn179, Asn200, and Asn210. The 50-residue stretch at 121 to 170 (CMSCYGHNKTLCEEKPQKCYEGEQCVFIIAEMVNGSGRVELKGCSDISNS) folds into the UPAR/Ly6 domain. A lipid anchor (GPI-anchor amidated serine) is attached at Ser233. The propeptide at 234–255 (MGTKASFTSSIFGSLLLLKLLF) is removed in mature form.

Belongs to the CNF-like-inhibitor family. Post-translationally, highly N-glycosylated. Not O-glycosylated. GPI-anchored. The GPI-anchor is cleaved, leading to secretion into the colonic lumen. As to expression, specifically present in enterocytes located at the uppermost epithelial layer of the colon (at protein level). Exclusively expressed in the large intestine: specifically expressed on the apical surface of epithelial cells located at the uppermost layer of the colonic gland.

The protein resides in the cell membrane. It is found in the secreted. Secreted protein specifically required to prevent invasion of Gram-negative bacteria in the inner mucus layer of the colon epithelium, a portion of the large intestine which is free of commensal microbiota. Prevents invasion of flagellated microbiota by binding to the flagellum of bacteria, such as P.mirabilis, thereby inhibiting bacterial motility in the intestinal lumen. Segregation of intestinal bacteria and epithelial cells in the colon is required to preserve intestinal homeostasis. The protein is Ly6/PLAUR domain-containing protein 8 of Mus musculus (Mouse).